The following is a 1116-amino-acid chain: MFSRKKRELMKTPSISKKNRAGSPNPQSSSGELPRKDWTEAPGLEPPATSLSTVAKGTGTLKRPTSLSRHASAAGFPLSGTATWTLVRGYRSPLSAASPAELPTEGAFPDGVEDISTLLADVARFAEGLEKLKECVLQDDLLEARRPLAHECLGEALRVMRQVISRYPLLNTVETLTAAGTLIAKVKAFHYECNNESDKREFEKALETIAVSFSCTVSEFLLGEVDSSTLLAVPPGDPSQSMENLYGAGTEGPPHNVEECEEGCLPPEEVDMLLQRCEGGVDAALQYAKDMARYMKDLISYLEKRTTLEMEFAKGLQKVVHNCRQSVTHEPHMPLLSIYSLALEQDLEFGHGMVQAAGTLQTQTFMQPLTLRRLEHERRRKEIKESWHRAQRKLQEAEANLRKAKQGYKQRCEDHDKARLQVAKAEEEQQGTGPGAGTAASKALDKRRRLEEEAKNKAEEAMATYRTCVADAKTQKQELEDTKVTALRQIQEVIRQSDQTIKSATISYYQLMHMQTAPLPVNFQMLCESSKLYDPGQQYASHVRQLQRGEEPDVRYDFEPYVSNNSWSPIMRTRKGSFNPGDASGPEAAGSPPEEGGTSEAAPNKDHRGGRGHQVHKSWPISISDTEVGLDTSSGDLKKFDRTSSSGTMSSSEELGDQEAGLVASAFDSADLNGMDPELPVAMPSGPFRHVGLSKAARTHRLRKLRTPAKCRECNSYVYFQGAECEECCLACHKKCLETLAIQCGHKKLQGRLQLFGQDFSQAALSTPDGVPFIVKKCVCEIERRALHTKGIYRVNGVKTRVEKLCQAFENGKELVELSQASPHDISNVLKLYLRQLPEPLISFRFYHELVGLAKDSLKAEAEAKAASRGRQGGSESEAATLAMVGRLRELMQDLPAENRATLLYLLKHLRRIVEMEQDNKMTPGNLGIVFGPTLLRPRPTDATVSLSSLVDYPHQARVIETLIVHYGLVFEEEPEEAPGSQEGASTQCGQLESAEGIVFPLQEEAEDGSRESHAASNDSDSELEDASDPLSSSDASALHRLSFLEQTEAGLEEGPQSHSGSEEQLEGEDGAPGPWLCHFNTNQSNNTSRAPLPTMRLRGGQITGGTSQERQPQFV.

The interval 1 to 72 is disordered; it reads MFSRKKRELM…RPTSLSRHAS (72 aa). Polar residues predominate over residues 22-31; sequence GSPNPQSSSG. Phosphoserine occurs at positions 23, 72, 92, and 98. One can recognise an F-BAR domain in the interval 268–538; the sequence is EEVDMLLQRC…SSKLYDPGQQ (271 aa). Positions 375–498 form a coiled coil; sequence EHERRRKEIK…QIQEVIRQSD (124 aa). Residues 422–457 form a disordered region; that stretch reads VAKAEEEQQGTGPGAGTAASKALDKRRRLEEEAKNK. Basic and acidic residues predominate over residues 448-457; the sequence is RRLEEEAKNK. 4 positions are modified to phosphoserine: S568, S577, S591, and S618. Residues 569–658 form a disordered region; that stretch reads PIMRTRKGSF…MSSSEELGDQ (90 aa). A compositionally biased stretch (polar residues) spans 621–635; that stretch reads ISISDTEVGLDTSSG. The segment covering 643–652 has biased composition (low complexity); it reads TSSSGTMSSS. The Phorbol-ester/DAG-type zinc finger occupies 699–744; it reads THRLRKLRTPAKCRECNSYVYFQGAECEECCLACHKKCLETLAIQC. In terms of domain architecture, Rho-GAP spans 758–971; the sequence is QDFSQAALST…TLIVHYGLVF (214 aa). Phosphoserine occurs at positions 946, 1017, 1020, and 1022. 2 disordered regions span residues 1004-1035 and 1050-1116; these read EEAEDGSRESHAASNDSDSELEDASDPLSSSD and AGLE…PQFV. Polar residues-rich tracts occupy residues 1080–1090 and 1105–1116; these read FNTNQSNNTSR and GGTSQERQPQFV.

It is found in the cytoplasm. It localises to the cell projection. Its subcellular location is the ruffle membrane. Its function is as follows. Contains a GTPase activator for the Rho-type GTPases (RhoGAP) domain that would be able to negatively regulate the actin cytoskeleton as well as cell spreading. However, also contains N-terminally a BAR-domin which is able to play an autoinhibitory effect on this RhoGAP activity. This chain is Rho GTPase-activating protein 45, found in Mus musculus (Mouse).